A 256-amino-acid chain; its full sequence is Protein FixA (256 aa).

This sequence belongs to the ETF beta-subunit/FixA family. As to quaternary structure, heterodimer of FixA and FixB.

Its pathway is amine and polyamine metabolism; carnitine metabolism. Its function is as follows. Required for anaerobic carnitine reduction. May bring reductant to CaiA. In Escherichia coli O139:H28 (strain E24377A / ETEC), this protein is Protein FixA.